The sequence spans 271 residues: 3-methyl-2-oxobutanoate hydroxymethyltransferase (271 aa).

Mg(2+) is bound by residues Asp51 and Asp90. 3-methyl-2-oxobutanoate is bound by residues 51-52 (DS), Asp90, and Lys118. Glu120 contacts Mg(2+). Residue Glu186 is the Proton acceptor of the active site.

It belongs to the PanB family. Homodecamer; pentamer of dimers. Requires Mg(2+) as cofactor.

The protein localises to the cytoplasm. The catalysed reaction is 3-methyl-2-oxobutanoate + (6R)-5,10-methylene-5,6,7,8-tetrahydrofolate + H2O = 2-dehydropantoate + (6S)-5,6,7,8-tetrahydrofolate. Its pathway is cofactor biosynthesis; (R)-pantothenate biosynthesis; (R)-pantoate from 3-methyl-2-oxobutanoate: step 1/2. Catalyzes the reversible reaction in which hydroxymethyl group from 5,10-methylenetetrahydrofolate is transferred onto alpha-ketoisovalerate to form ketopantoate. This chain is 3-methyl-2-oxobutanoate hydroxymethyltransferase, found in Xanthomonas axonopodis pv. citri (strain 306).